The primary structure comprises 222 residues: Charged multivesicular body protein 2a (222 aa).

Residue M1 is modified to N-acetylmethionine. A coiled-coil region spans residues 12-53 (EELLRQNQRALNRAMRELDRERQKLETQEKKIIADIKKMAKQ). The tract at residues 56–222 (MDAVRIMAKD…EERLKNLRRD (167 aa)) is interaction with VPS4B. S184 is subject to Phosphoserine. T185 bears the Phosphothreonine mark. Residues S188, S190, and S203 each carry the phosphoserine modification. The stretch at 195–222 (GKKAEAAASALADADADLEERLKNLRRD) forms a coiled coil. The MIT-interacting motif motif lies at 210 to 220 (ADLEERLKNLR). The segment at 217 to 222 (KNLRRD) is interaction with VTA1.

The protein belongs to the SNF7 family. In terms of assembly, probable core component of the endosomal sorting required for transport complex III (ESCRT-III). ESCRT-III components are thought to multimerize to form a flat lattice on the perimeter membrane of the endosome. Several assembly forms of ESCRT-III may exist that interact and act sequentially. In vitro, heteromerizes with CHMP3 (but not CHMP4) to form helical tubular structures that expose membrane-interacting sites on the outside whereas VPS4B can associate on the inside of the tubule. Interacts with CHMP1B, CHMP2B, CHMP3, CHMP4A, CHMP4B, CHMP4C and CHMP5. Interacts with VPS4A; the interaction is direct. Interacts with VPS4B; the interaction is direct. Interacts with MITD1. Interacts with VTA1; the interaction probably involves the open conformation of CHMP2A. In terms of processing, ISGylated in a CHMP5-dependent manner. Isgylation weakens and inhibits its interactions with VPS4A and VTA1 respectively.

It is found in the late endosome membrane. The protein resides in the nucleus envelope. Its function is as follows. Probable core component of the endosomal sorting required for transport complex III (ESCRT-III) which is involved in multivesicular bodies (MVBs) formation and sorting of endosomal cargo proteins into MVBs. MVBs contain intraluminal vesicles (ILVs) that are generated by invagination and scission from the limiting membrane of the endosome and mostly are delivered to lysosomes enabling degradation of membrane proteins, such as stimulated growth factor receptors, lysosomal enzymes and lipids. The MVB pathway appears to require the sequential function of ESCRT-O, -I,-II and -III complexes. ESCRT-III proteins mostly dissociate from the invaginating membrane before the ILV is released. The ESCRT machinery also functions in topologically equivalent membrane fission events, such as the terminal stages of cytokinesis. Together with SPAST, the ESCRT-III complex promotes nuclear envelope sealing and mitotic spindle disassembly during late anaphase. Recruited to the reforming nuclear envelope (NE) during anaphase by LEMD2. ESCRT-III proteins are believed to mediate the necessary vesicle extrusion and/or membrane fission activities, possibly in conjunction with the AAA ATPase VPS4. (Microbial infection) The ESCRT machinery functions in topologically equivalent membrane fission events, such as the budding of enveloped viruses (HIV-1 and other lentiviruses). Involved in HIV-1 p6- and p9-dependent virus release. In Homo sapiens (Human), this protein is Charged multivesicular body protein 2a (CHMP2A).